Here is a 155-residue protein sequence, read N- to C-terminus: UPF0225 protein PC1_1977 (155 aa).

It belongs to the UPF0225 family.

The protein is UPF0225 protein PC1_1977 of Pectobacterium carotovorum subsp. carotovorum (strain PC1).